The chain runs to 181 residues: Photosystem I assembly protein Ycf4 (181 aa).

The next 2 helical transmembrane spans lie at 19–41 (YAWC…GSYF) and 61–83 (IVMM…SIFT).

Belongs to the Ycf4 family.

The protein localises to the plastid. The protein resides in the chloroplast thylakoid membrane. Seems to be required for the assembly of the photosystem I complex. The protein is Photosystem I assembly protein Ycf4 of Guillardia theta (Cryptophyte).